Reading from the N-terminus, the 330-residue chain is MYTEINEMLTPKVLKVQAESPYKARIVLEPLERGFGHTLGNALRRILLSSMPGSAITEASIDGVLHEYSTIEGVQEDVVDLLLNLKSVAIKLTVGNEAQVTLNKEGPCQVTAGDIQLTHGQEIINPELVIANLNEKGKLNMTLKVERGIGFHNTDAFVRYHDDEIEKKTVGKLKIDNSFSPVKKVAYFVDSARVENRTDLDKLTIELETNGTIDAEEAIRISASILQRQLHAFVDMKFEESRADNKERNDFDPVLLRSVDDLELTVRSANCLKAENIHYIGDLVQRTESELLKTPNLGKKSLTEIKDVLASRSLSLGMKLENWPPASLGE.

Positions 1-237 are alpha N-terminal domain (alpha-NTD); it reads MYTEINEMLT…RQLHAFVDMK (237 aa). Positions 251–330 are alpha C-terminal domain (alpha-CTD); that stretch reads FDPVLLRSVD…ENWPPASLGE (80 aa).

This sequence belongs to the RNA polymerase alpha chain family. As to quaternary structure, homodimer. The RNAP catalytic core consists of 2 alpha, 1 beta, 1 beta' and 1 omega subunit. When a sigma factor is associated with the core the holoenzyme is formed, which can initiate transcription.

It catalyses the reaction RNA(n) + a ribonucleoside 5'-triphosphate = RNA(n+1) + diphosphate. Functionally, DNA-dependent RNA polymerase catalyzes the transcription of DNA into RNA using the four ribonucleoside triphosphates as substrates. In Legionella pneumophila (strain Paris), this protein is DNA-directed RNA polymerase subunit alpha.